Here is a 328-residue protein sequence, read N- to C-terminus: Beta-ketoacyl-[acyl-carrier-protein] synthase III (328 aa).

Catalysis depends on residues Cys-122 and His-255. Residues 256 to 260 are ACP-binding; it reads QANIR. Residue Asn-285 is part of the active site.

It belongs to the thiolase-like superfamily. FabH family. In terms of assembly, homodimer.

Its subcellular location is the cytoplasm. The catalysed reaction is malonyl-[ACP] + acetyl-CoA + H(+) = 3-oxobutanoyl-[ACP] + CO2 + CoA. It functions in the pathway lipid metabolism; fatty acid biosynthesis. Functionally, catalyzes the condensation reaction of fatty acid synthesis by the addition to an acyl acceptor of two carbons from malonyl-ACP. Catalyzes the first condensation reaction which initiates fatty acid synthesis and may therefore play a role in governing the total rate of fatty acid production. Possesses both acetoacetyl-ACP synthase and acetyl transacylase activities. Its substrate specificity determines the biosynthesis of branched-chain and/or straight-chain of fatty acids. In Janthinobacterium sp. (strain Marseille) (Minibacterium massiliensis), this protein is Beta-ketoacyl-[acyl-carrier-protein] synthase III.